A 1463-amino-acid chain; its full sequence is Kinesin-like protein KIF15 (1463 aa).

Residues alanine 18–isoleucine 354 form the Kinesin motor domain. Residue glycine 99–threonine 106 coordinates ATP. Positions alanine 387–serine 424 are disordered. Residues serine 398–valine 414 are compositionally biased toward polar residues. Low complexity predominate over residues serine 415–serine 424. Coiled-coil stretches lie at residues serine 436–asparagine 517 and threonine 586–lysine 646. 3 disordered regions span residues alanine 686–isoleucine 720, phenylalanine 1335–threonine 1356, and glutamine 1409–alanine 1444. Positions aspartate 701–proline 715 are enriched in polar residues. A compositionally biased stretch (basic and acidic residues) spans glutamate 1418 to glutamine 1428.

The protein belongs to the TRAFAC class myosin-kinesin ATPase superfamily. Kinesin family. KLP2 subfamily. Homodimer.

It localises to the cytoplasm. Its subcellular location is the cytoskeleton. The protein resides in the spindle. Its function is as follows. Plus-end directed kinesin-like motor enzyme involved in mitotic spindle assembly. Plays a role in positioning spindle poles during mitosis, specifically at prometaphase. The polypeptide is Kinesin-like protein KIF15 (KIF15) (Strongylocentrotus purpuratus (Purple sea urchin)).